A 222-amino-acid polypeptide reads, in one-letter code: N-(5'-phosphoribosyl)anthranilate isomerase (222 aa).

It belongs to the TrpF family.

It carries out the reaction N-(5-phospho-beta-D-ribosyl)anthranilate = 1-(2-carboxyphenylamino)-1-deoxy-D-ribulose 5-phosphate. It participates in amino-acid biosynthesis; L-tryptophan biosynthesis; L-tryptophan from chorismate: step 3/5. In Rhizobium leguminosarum bv. trifolii (strain WSM2304), this protein is N-(5'-phosphoribosyl)anthranilate isomerase.